Reading from the N-terminus, the 242-residue chain is Uridylate kinase (242 aa).

Residue 8–11 (KFSG) coordinates ATP. UMP is bound at residue G50. Residues G51 and R55 each contribute to the ATP site. UMP-binding positions include D71 and 132 to 139 (TGNPFFTT). 3 residues coordinate ATP: T159, Y165, and D168.

It belongs to the UMP kinase family. As to quaternary structure, homohexamer.

The protein resides in the cytoplasm. The catalysed reaction is UMP + ATP = UDP + ADP. The protein operates within pyrimidine metabolism; CTP biosynthesis via de novo pathway; UDP from UMP (UMPK route): step 1/1. With respect to regulation, inhibited by UTP. Catalyzes the reversible phosphorylation of UMP to UDP. The polypeptide is Uridylate kinase (Nitratiruptor sp. (strain SB155-2)).